The sequence spans 350 residues: Ion-translocating oxidoreductase complex subunit D (350 aa).

3 helical membrane passes run 25–45 (ILCALPGVAVQCFFFGWGTVI), 89–109 (IPPLAPWWVTVIGTLFAIVIV), and 129–149 (VMLLISFPVQMTSWVAPSVIA). Threonine 185 is subject to FMN phosphoryl threonine. A run of 5 helical transmembrane segments spans residues 212–232 (GFGVGWFWVNLAYLAGGLVML), 239–259 (WHITAGILAALFICSGVGYLL), 264–284 (FTGPLLHLFSGATMLAAFFIA), 298–318 (LVFGALIGILVYIIRTFGGYP), and 319–339 (DAFAFAILLANLCAPFIDHYM).

The protein belongs to the NqrB/RnfD family. As to quaternary structure, the complex is composed of six subunits: RnfA, RnfB, RnfC, RnfD, RnfE and RnfG. Requires FMN as cofactor.

It localises to the cell inner membrane. Its function is as follows. Part of a membrane-bound complex that couples electron transfer with translocation of ions across the membrane. The chain is Ion-translocating oxidoreductase complex subunit D from Shewanella sediminis (strain HAW-EB3).